The sequence spans 567 residues: Major facilitator superfamily transporter MG061 (567 aa).

Transmembrane regions (helical) follow at residues 15–35, 78–98, 104–124, 193–213, 230–250, 264–284, 321–341, 363–383, 405–425, 426–446, 462–482, and 503–523; these read ITLW…WFVI, WTIT…VLKF, VLIM…GDPL, GYAL…TLVV, ILSN…FTPF, VYIM…FLWF, LIGV…PAWF, TGLA…FVVF, IVVL…SAAG, FALI…LSSS, LPIL…LFDI, and PGVI…NLIV.

The protein belongs to the major facilitator superfamily.

It localises to the cell membrane. The polypeptide is Major facilitator superfamily transporter MG061 (Mycoplasma genitalium (strain ATCC 33530 / DSM 19775 / NCTC 10195 / G37) (Mycoplasmoides genitalium)).